A 280-amino-acid chain; its full sequence is Tumor necrosis factor ligand superfamily member 6 (280 aa).

Over 1-80 the chain is Cytoplasmic; that stretch reads MQQPFNYPYP…KKRGNHSTGL (80 aa). Residues 20–70 form a disordered region; it reads SSPWAPPGTVLPCPTSVPRRPGQRRPPPPPPPPPLPPPPPSPLPPLPLPPL. Pro residues predominate over residues 43 to 69; the sequence is RRPPPPPPPPPLPPPPPSPLPPLPLPP. The helical; Signal-anchor for type II membrane protein transmembrane segment at 81-101 threads the bilayer; the sequence is CLLVMFFMVLVALVGLGLGMF. Over 102–280 the chain is Extracellular; sequence QLFHLQKELA…SQTFFGLYKL (179 aa). The tract at residues 117 to 155 is disordered; it reads TSQKHTASSLEKQIGHPSPPPEKKEQRKVAHLTGKPNSR. Residues 144-280 form the THD domain; that stretch reads KVAHLTGKPN…SQTFFGLYKL (137 aa). Asparagine 183 carries an N-linked (GlcNAc...) asparagine glycan. An intrachain disulfide couples cysteine 201 to cysteine 232. 2 N-linked (GlcNAc...) asparagine glycosylation sites follow: asparagine 249 and asparagine 259.

It belongs to the tumor necrosis factor family. As to quaternary structure, homotrimer. Interacts with ARHGAP9, BAIAP2L1, BTK, CACNB3, CACNB4, CRK, DLG2, DNMBP, DOCK4, EPS8L3, FGR, FYB1, FYN, HCK, ITK, ITSN2, KALRN, LYN, MACC1, MIA, MPP4, MYO15A, NCF1, NCK1, NCK2, NCKIPSD, OSTF1, PIK3R1, PSTPIP1, RIMBP3C, SAMSN1, SH3GL3, SH3PXD2B, SH3PXD2A, SH3RF2, SKAP2, SNX33, SNX9, SORBS3, SPTA1, SRC, SRGAP1, SRGAP2, SRGAP3, TEC, TJP3 and YES1. The soluble form derives from the membrane form by proteolytic processing. The membrane-bound form undergoes two successive intramembrane proteolytic cleavages. The first one is processed by ADAM10 producing an N-terminal fragment, which lacks the receptor-binding extracellular domain. This ADAM10-processed FasL (FasL APL) remnant form is still membrane anchored and further processed by SPPL2A that liberates the FasL intracellular domain (FasL ICD). FasL shedding by ADAM10 is a prerequisite for subsequent intramembrane cleavage by SPPL2A in T-cells. Post-translationally, phosphorylated by FGR on tyrosine residues; this is required for ubiquitination and subsequent internalization. In terms of processing, N-glycosylated. Glycosylation enhances apoptotic activity. Monoubiquitinated.

The protein localises to the cell membrane. It localises to the cytoplasmic vesicle lumen. The protein resides in the lysosome lumen. Its subcellular location is the secreted. It is found in the nucleus. In terms of biological role, cytokine that binds to TNFRSF6/FAS, a receptor that transduces the apoptotic signal into cells. Involved in cytotoxic T-cell-mediated apoptosis, natural killer cell-mediated apoptosis and in T-cell development. Initiates fratricidal/suicidal activation-induced cell death (AICD) in antigen-activated T-cells contributing to the termination of immune responses. TNFRSF6/FAS-mediated apoptosis has also a role in the induction of peripheral tolerance. Binds to TNFRSF6B/DcR3, a decoy receptor that blocks apoptosis. Induces FAS-mediated activation of NF-kappa-B, initiating non-apoptotic signaling pathways. Can induce apoptosis but does not appear to be essential for this process. Its function is as follows. Cytoplasmic form induces gene transcription inhibition. The chain is Tumor necrosis factor ligand superfamily member 6 (FASLG) from Macaca fascicularis (Crab-eating macaque).